The following is a 143-amino-acid chain: Large ribosomal subunit protein uL16c (143 aa).

It belongs to the universal ribosomal protein uL16 family. As to quaternary structure, part of the 50S ribosomal subunit.

The protein localises to the plastid. Its subcellular location is the chloroplast. The polypeptide is Large ribosomal subunit protein uL16c (Cyanidioschyzon merolae (strain NIES-3377 / 10D) (Unicellular red alga)).